Consider the following 369-residue polypeptide: Zeaxanthin 7,8(7',8')-cleavage dioxygenase, chromoplastic (369 aa).

4 residues coordinate Fe cation: histidine 62, histidine 112, histidine 177, and histidine 356.

Belongs to the carotenoid oxygenase family. Fe(2+) is required as a cofactor. In the style branches.

Its subcellular location is the plastid. It localises to the chromoplast. The catalysed reaction is all-trans-zeaxanthin + 2 O2 = crocetin dialdehyde + 2 3beta-hydroxy-beta-cyclocitral. In terms of biological role, cleaves zeaxanthin symmetrically at the 7-8 and 7'-8' double bonds to produce crocetin dialdehyde and hydroxy-beta-cyclocitral, two water-soluble precursors sequestred in vacuoles and involved in the synthesis of saffron pigment and aroma. The chain is Zeaxanthin 7,8(7',8')-cleavage dioxygenase, chromoplastic (ZCD) from Crocus sativus (Saffron).